The following is a 329-amino-acid chain: Cardiolipin synthase (CMP-forming) (329 aa).

The transit peptide at 1–34 (MPPSVATHASLLLKAAAAAAHLHPKPFFSPRAAP) directs the protein to the mitochondrion. Positions 27–55 (FFSPRAAPPRIPSAPAPPAAGGSRYRPTT) are disordered. The segment covering 32 to 44 (AAPPRIPSAPAPP) has biased composition (pro residues). 5 consecutive transmembrane segments (helical) span residues 134 to 154 (LLTLPTVLTIGRVAAVPLLIS), 156 to 176 (FYMEGPWAATATTGIFLAAAV), 194 to 214 (FGAFLDPVADKLMVAATLVLL), 228 to 248 (PWLLTVPAIAIIGREITMSAV), and 298 to 318 (VTSGIALLYVSAGLAIWSLVV). Residues 319 to 329 (YMRKIWRILLK) lie on the Mitochondrial intermembrane side of the membrane.

This sequence belongs to the CDP-alcohol phosphatidyltransferase class-I family. Mn(2+) is required as a cofactor.

The protein resides in the mitochondrion inner membrane. The catalysed reaction is a CDP-1,2-diacyl-sn-glycerol + a 1,2-diacyl-sn-glycero-3-phospho-(1'-sn-glycerol) = a cardiolipin + CMP + H(+). Its function is as follows. Catalyzes the synthesis of cardiolipin (CL) (diphosphatidylglycerol) by specifically transferring a phosphatidyl group from CDP-diacylglycerol to phosphatidylglycerol (PG). CL is a key phospholipid in mitochondrial membranes and plays important roles in maintaining the functional integrity and dynamics of mitochondria under both optimal and stress conditions. The sequence is that of Cardiolipin synthase (CMP-forming) from Oryza sativa subsp. japonica (Rice).